Consider the following 348-residue polypeptide: UPF0283 membrane protein HAPS_0079 (348 aa).

Helical transmembrane passes span 57 to 77 (FLAA…QWLI), 86 to 106 (IYFA…GAII), and 203 to 223 (ENAI…MVAW).

This sequence belongs to the UPF0283 family.

Its subcellular location is the cell inner membrane. This is UPF0283 membrane protein HAPS_0079 from Glaesserella parasuis serovar 5 (strain SH0165) (Haemophilus parasuis).